The primary structure comprises 272 residues: NAD kinase (272 aa).

The active-site Proton acceptor is Asp50. Residues 50-51 (DG), 126-127 (NE), Arg152, Asp154, 165-170 (TAYNKS), and Ala189 contribute to the NAD(+) site.

The protein belongs to the NAD kinase family. The cofactor is a divalent metal cation.

It localises to the cytoplasm. It catalyses the reaction NAD(+) + ATP = ADP + NADP(+) + H(+). Involved in the regulation of the intracellular balance of NAD and NADP, and is a key enzyme in the biosynthesis of NADP. Catalyzes specifically the phosphorylation on 2'-hydroxyl of the adenosine moiety of NAD to yield NADP. The sequence is that of NAD kinase from Streptococcus pneumoniae (strain Hungary19A-6).